Consider the following 216-residue polypeptide: Probable transaldolase (216 aa).

Residue Lys-84 is the Schiff-base intermediate with substrate of the active site.

This sequence belongs to the transaldolase family. Type 3B subfamily.

Its subcellular location is the cytoplasm. The enzyme catalyses D-sedoheptulose 7-phosphate + D-glyceraldehyde 3-phosphate = D-erythrose 4-phosphate + beta-D-fructose 6-phosphate. Its pathway is carbohydrate degradation; pentose phosphate pathway; D-glyceraldehyde 3-phosphate and beta-D-fructose 6-phosphate from D-ribose 5-phosphate and D-xylulose 5-phosphate (non-oxidative stage): step 2/3. Transaldolase is important for the balance of metabolites in the pentose-phosphate pathway. The polypeptide is Probable transaldolase (Lysinibacillus sphaericus (strain C3-41)).